Consider the following 295-residue polypeptide: 33 kDa chaperonin (295 aa).

2 cysteine pairs are disulfide-bonded: Cys237–Cys239 and Cys270–Cys273.

The protein belongs to the HSP33 family. Post-translationally, under oxidizing conditions two disulfide bonds are formed involving the reactive cysteines. Under reducing conditions zinc is bound to the reactive cysteines and the protein is inactive.

The protein localises to the cytoplasm. Redox regulated molecular chaperone. Protects both thermally unfolding and oxidatively damaged proteins from irreversible aggregation. Plays an important role in the bacterial defense system toward oxidative stress. The chain is 33 kDa chaperonin from Lactiplantibacillus plantarum (strain ATCC BAA-793 / NCIMB 8826 / WCFS1) (Lactobacillus plantarum).